Reading from the N-terminus, the 335-residue chain is GTPase Obg (335 aa).

The Obg domain occupies 1–159 (MKFVDSAKIS…IELEMELKLM (159 aa)). The region spanning 160–323 (ADVGLVGFPN…LKDELWRQIS (164 aa)) is the OBG-type G domain. GTP contacts are provided by residues 166–173 (GFPNAGKS), 191–195 (FTTLV), 213–216 (DIPG), 280–283 (TKMD), and 304–306 (SSV). Mg(2+)-binding residues include Ser173 and Thr193.

Belongs to the TRAFAC class OBG-HflX-like GTPase superfamily. OBG GTPase family. In terms of assembly, monomer. Mg(2+) serves as cofactor.

The protein localises to the cytoplasm. In terms of biological role, an essential GTPase which binds GTP, GDP and possibly (p)ppGpp with moderate affinity, with high nucleotide exchange rates and a fairly low GTP hydrolysis rate. Plays a role in control of the cell cycle, stress response, ribosome biogenesis and in those bacteria that undergo differentiation, in morphogenesis control. The sequence is that of GTPase Obg from Chlorobaculum parvum (strain DSM 263 / NCIMB 8327) (Chlorobium vibrioforme subsp. thiosulfatophilum).